A 406-amino-acid polypeptide reads, in one-letter code: Tyrosine--tRNA ligase (406 aa).

Positions 48–57 (PSRPDLHLGH) match the 'HIGH' region motif. Residues 232–236 (KMSKS) carry the 'KMSKS' region motif. Lys235 lines the ATP pocket. Residues 339-401 (MPVVELLMAL…GKRKFFKVAR (63 aa)) form the S4 RNA-binding domain.

It belongs to the class-I aminoacyl-tRNA synthetase family. TyrS type 2 subfamily. In terms of assembly, homodimer.

Its subcellular location is the cytoplasm. The catalysed reaction is tRNA(Tyr) + L-tyrosine + ATP = L-tyrosyl-tRNA(Tyr) + AMP + diphosphate + H(+). Its function is as follows. Catalyzes the attachment of tyrosine to tRNA(Tyr) in a two-step reaction: tyrosine is first activated by ATP to form Tyr-AMP and then transferred to the acceptor end of tRNA(Tyr). The protein is Tyrosine--tRNA ligase of Chlorobaculum tepidum (strain ATCC 49652 / DSM 12025 / NBRC 103806 / TLS) (Chlorobium tepidum).